A 482-amino-acid polypeptide reads, in one-letter code: UDP-glycosyltransferase 1 (482 aa).

A glycan (N-linked (GlcNAc...) asparagine) is linked at asparagine 243. Residues 450-470 (IYLVYALVLGSAWWIGKTILG) form a helical membrane-spanning segment.

It belongs to the glycosyltransferase 28 family.

The protein localises to the membrane. The enzyme catalyses exophillate aglycone + UDP-alpha-D-glucose = exophillate + UDP + H(+). Its pathway is secondary metabolite biosynthesis. Its function is as follows. Acts as a depside 2-O-glucosyltransferase that catalyzes the first glycosylation step during phaeomoniecin D biosynthesis by producing the intermediate exophillic acid which is further O-galactosylated into phaeomoniecin D by the C-galactosyltransferase OGT2. In Phaeomoniella chlamydospora (Phaeoacremonium chlamydosporum), this protein is UDP-glycosyltransferase 1.